Reading from the N-terminus, the 179-residue chain is Ribosome maturation factor RimM (179 aa).

In terms of domain architecture, PRC barrel spans 102-179 (DGEYYWYQLE…EMKVEWDADF (78 aa)).

This sequence belongs to the RimM family. As to quaternary structure, binds ribosomal protein uS19.

Its subcellular location is the cytoplasm. In terms of biological role, an accessory protein needed during the final step in the assembly of 30S ribosomal subunit, possibly for assembly of the head region. Essential for efficient processing of 16S rRNA. May be needed both before and after RbfA during the maturation of 16S rRNA. It has affinity for free ribosomal 30S subunits but not for 70S ribosomes. In Pseudomonas syringae pv. tomato (strain ATCC BAA-871 / DC3000), this protein is Ribosome maturation factor RimM.